Here is a 94-residue protein sequence, read N- to C-terminus: ESAT-6-like protein EsxL (94 aa).

It belongs to the WXG100 family. ESAT-6 subfamily. As to quaternary structure, strongly interacts with EsxK to form a heterodimeric complex under reducing conditions. The complex is regulated by the redox state of EsxL.

It localises to the secreted. Its function is as follows. Induces apoptosis of host cells. Is immunogenic with highly specific seroreactivity towards TB patients' serum. The sequence is that of ESAT-6-like protein EsxL from Mycobacterium tuberculosis (strain ATCC 25618 / H37Rv).